The following is a 198-amino-acid chain: Nucleoid occlusion factor SlmA (198 aa).

The region spanning 10–70 (NRREEILQSL…SLIEFIEDSL (61 aa)) is the HTH tetR-type domain. The H-T-H motif DNA-binding region spans 33 to 52 (TTAKLAASVGVSEAALYRHF). Positions 117 to 145 (EQDRLQGRINQLFERIEAQLRQVMREKKM) form a coiled coil.

It belongs to the nucleoid occlusion factor SlmA family. In terms of assembly, homodimer. Interacts with FtsZ.

The protein localises to the cytoplasm. Its subcellular location is the nucleoid. Its function is as follows. Required for nucleoid occlusion (NO) phenomenon, which prevents Z-ring formation and cell division over the nucleoid. Acts as a DNA-associated cell division inhibitor that binds simultaneously chromosomal DNA and FtsZ, and disrupts the assembly of FtsZ polymers. SlmA-DNA-binding sequences (SBS) are dispersed on non-Ter regions of the chromosome, preventing FtsZ polymerization at these regions. The chain is Nucleoid occlusion factor SlmA from Klebsiella pneumoniae subsp. pneumoniae (strain ATCC 700721 / MGH 78578).